Consider the following 266-residue polypeptide: ATG8-interacting protein 2 (266 aa).

The short motif at 14–17 is the AIM (Atg8-family-interacting motif) element; sequence WEVV. The helical transmembrane segment at 191–210 threads the bilayer; sequence TNTVWSICIAAAVMGIVILG. The short motif at 218–221 is the AIM (Atg8-family-interacting motif) element; that stretch reads WQIL.

In terms of assembly, interacts with ATG8F.

It is found in the endoplasmic reticulum membrane. It localises to the membrane. Functionally, may be involved in salt stress-induced vesicle-to-vacuole trafficking pathway. Through its interaction with ATG8F, may enable delivery of the vesicle bodies to the vacuole by an autophagic pathway. Plays a role in seed germination in response to exogenous abscisic acid (ABA) treatment. This is ATG8-interacting protein 2 from Arabidopsis thaliana (Mouse-ear cress).